The following is a 335-amino-acid chain: Nicotinate-nucleotide--dimethylbenzimidazole phosphoribosyltransferase (335 aa).

The active-site Proton acceptor is the E304.

This sequence belongs to the CobT family.

The enzyme catalyses 5,6-dimethylbenzimidazole + nicotinate beta-D-ribonucleotide = alpha-ribazole 5'-phosphate + nicotinate + H(+). Its pathway is nucleoside biosynthesis; alpha-ribazole biosynthesis; alpha-ribazole from 5,6-dimethylbenzimidazole: step 1/2. In terms of biological role, catalyzes the synthesis of alpha-ribazole-5'-phosphate from nicotinate mononucleotide (NAMN) and 5,6-dimethylbenzimidazole (DMB). In Thermus thermophilus (strain ATCC 27634 / DSM 579 / HB8), this protein is Nicotinate-nucleotide--dimethylbenzimidazole phosphoribosyltransferase.